The chain runs to 419 residues: DNA ligase (419 aa).

Residues 1-120 (MLNHFPGHCS…ARQKRGAHTN (120 aa)) form an NTD region. Positions 121 to 317 (TGMIPPMLVK…NYHSAHLAKL (197 aa)) are AD domain. K151 serves as the catalytic N6-AMP-lysine intermediate. Residues 318–419 (KPLLDAEFIL…REPINVLEII (102 aa)) are OB domain.

Belongs to the ATP-dependent DNA ligase family.

It localises to the virion. The enzyme catalyses ATP + (deoxyribonucleotide)n-3'-hydroxyl + 5'-phospho-(deoxyribonucleotide)m = (deoxyribonucleotide)n+m + AMP + diphosphate.. Very low-fidelity DNA ligase that seals nicks in double-stranded DNA during DNA repair. Together with the viral repair DNA polymerase X, fills the single nucleotide gaps generated by the AP endonuclease. It is not essential for viral replication and recombination. Displays a very low adenylation activity towards DNA with 3'-dideoxy- or 3'-amino-terminated nicks compared to regular nick DNA. The polypeptide is DNA ligase (Ornithodoros (relapsing fever ticks)).